We begin with the raw amino-acid sequence, 587 residues long: Deoxynucleoside triphosphate triphosphohydrolase sahd-1 (587 aa).

Residues 92-262 (RFVHSLGTFS…GHDVDKMDYL (171 aa)) form the HD domain. Residues histidine 95, histidine 134, aspartate 135, and aspartate 257 each contribute to the Zn(2+) site. The interval 554 to 587 (EKFLTPRKRSPQDSPDEVSSSCSTAKRRLEFGSS) is disordered. Residue threonine 558 is modified to Phosphothreonine.

This sequence belongs to the SAMHD1 family. In terms of assembly, homodimer. Homotetramer; in dGTP-bound form. Zn(2+) is required as a cofactor.

The protein localises to the nucleus. It localises to the chromosome. The enzyme catalyses a 2'-deoxyribonucleoside 5'-triphosphate + H2O = a 2'-deoxyribonucleoside + triphosphate + H(+). Allosterically activated and regulated by GTP or dGTP. Allosteric activation promotes the formation of highly active homotetramers. Phosphorylation impairs homotetramerization, thereby inhibiting dNTPase activity. Functionally, has deoxynucleoside triphosphate (dNTPase) activity. dNTPase activity acts as a regulator of DNA precursor pools by regulating dNTP pools. Phosphorylation acts as a switch to control dNTPase-dependent and -independent functions. The chain is Deoxynucleoside triphosphate triphosphohydrolase sahd-1 from Caenorhabditis elegans.